Consider the following 540-residue polypeptide: MLMATVSPARREPTPQAVRASPMPSAAAALVRRGGGGSGGTVLGKYELGRVLGQGSFAKVYQARHLETDECVAIKVLDKEKAVKGGMVHLVKREINVLRRVRHPNIVQLFEVMASKTKIYFVMEYVRGGELFSRVSKGRLREDTARRYFQQLVSAVDFCHARGVFHRDLKPENLLVDENGDLKVSDFGLAAGPDQFDPDGLLHTFCGTPAYVAPEVLRRRGYDGAKADIWSCGVILFALMAGYLPFHDHNIMVLYRKIYNGEFRCPRWFSKDFTRLITRLLDANPKTRITVPEIIESDWFKKGYKPVKFYIEDDKLYNLSDDVLNLEPADPVPPPLGLAPPVPPPPQGDDPDGSGSESDSSVVSCPATLSTGESQRVRGSLPRPASLNAFDIISFSKGFNLSGLFEERGNEIRFVSGEPMSDIVKKLEEIAKVKSFTVRRKDWRVSIEGTREGVKGPLTIGAEIFELTPSLVVVEVKRKAGDNEEYEDFCNMELKPGMQHLVHQMLPAPNGTPVSEKVERSSSLQAPLTLKLIGTEGSMS.

The segment at 1–23 is disordered; the sequence is MLMATVSPARREPTPQAVRASPM. The region spanning 46 to 300 is the Protein kinase domain; the sequence is YELGRVLGQG…VPEIIESDWF (255 aa). ATP contacts are provided by residues 52–60 and Lys75; that span reads LGQGSFAKV. The active-site Proton acceptor is Asp168. The interval 186–215 is activation loop; the sequence is DFGLAAGPDQFDPDGLLHTFCGTPAYVAPE. Positions 333-348 are enriched in pro residues; it reads PPPLGLAPPVPPPPQG. Residues 333–380 are disordered; that stretch reads PPPLGLAPPVPPPPQGDDPDGSGSESDSSVVSCPATLSTGESQRVRGS. Residues 353-364 are compositionally biased toward low complexity; the sequence is GSGSESDSSVVS. The 37-residue stretch at 370 to 406 folds into the NAF domain; sequence STGESQRVRGSLPRPASLNAFDIISFSKGFNLSGLFE. The segment at 409–438 is PPI; that stretch reads GNEIRFVSGEPMSDIVKKLEEIAKVKSFTV.

It belongs to the protein kinase superfamily. CAMK Ser/Thr protein kinase family. SNF1 subfamily. Requires Mg(2+) as cofactor. In terms of processing, autophosphorylated. In terms of tissue distribution, expressed at low levels in leaf blades.

The catalysed reaction is L-seryl-[protein] + ATP = O-phospho-L-seryl-[protein] + ADP + H(+). It catalyses the reaction L-threonyl-[protein] + ATP = O-phospho-L-threonyl-[protein] + ADP + H(+). Functionally, involved in drought stress tolerance. CIPK serine-threonine protein kinases interact with CBL proteins. Binding of a CBL protein to the regulatory NAF domain of CIPK protein lead to the activation of the kinase in a calcium-dependent manner. In Oryza sativa subsp. japonica (Rice), this protein is CBL-interacting protein kinase 12 (CIPK12).